A 491-amino-acid polypeptide reads, in one-letter code: UDP-N-acetylmuramate--L-alanine ligase (491 aa).

126 to 132 lines the ATP pocket; it reads GTHGKTT.

Belongs to the MurCDEF family.

Its subcellular location is the cytoplasm. The catalysed reaction is UDP-N-acetyl-alpha-D-muramate + L-alanine + ATP = UDP-N-acetyl-alpha-D-muramoyl-L-alanine + ADP + phosphate + H(+). It functions in the pathway cell wall biogenesis; peptidoglycan biosynthesis. In terms of biological role, cell wall formation. This is UDP-N-acetylmuramate--L-alanine ligase from Salmonella choleraesuis (strain SC-B67).